A 363-amino-acid polypeptide reads, in one-letter code: Chorismate synthase (363 aa).

Arginine 48 contributes to the NADP(+) binding site. Residues 125 to 127, 238 to 239, glycine 278, 293 to 297, and arginine 319 each bind FMN; these read RSS, NA, and KPTAS.

Belongs to the chorismate synthase family. As to quaternary structure, homotetramer. The cofactor is FMNH2.

The enzyme catalyses 5-O-(1-carboxyvinyl)-3-phosphoshikimate = chorismate + phosphate. Its pathway is metabolic intermediate biosynthesis; chorismate biosynthesis; chorismate from D-erythrose 4-phosphate and phosphoenolpyruvate: step 7/7. In terms of biological role, catalyzes the anti-1,4-elimination of the C-3 phosphate and the C-6 proR hydrogen from 5-enolpyruvylshikimate-3-phosphate (EPSP) to yield chorismate, which is the branch point compound that serves as the starting substrate for the three terminal pathways of aromatic amino acid biosynthesis. This reaction introduces a second double bond into the aromatic ring system. This Acinetobacter baylyi (strain ATCC 33305 / BD413 / ADP1) protein is Chorismate synthase.